A 628-amino-acid polypeptide reads, in one-letter code: tRNA uridine 5-carboxymethylaminomethyl modification enzyme MnmG (628 aa).

FAD-binding positions include Gly11 to Gly16, Val123, and Ser178. NAD(+) is bound at residue Gly271 to Phe285. Gln368 serves as a coordination point for FAD.

The protein belongs to the MnmG family. Homodimer. Heterotetramer of two MnmE and two MnmG subunits. It depends on FAD as a cofactor.

The protein localises to the cytoplasm. Functionally, NAD-binding protein involved in the addition of a carboxymethylaminomethyl (cmnm) group at the wobble position (U34) of certain tRNAs, forming tRNA-cmnm(5)s(2)U34. This chain is tRNA uridine 5-carboxymethylaminomethyl modification enzyme MnmG, found in Bacteroides thetaiotaomicron (strain ATCC 29148 / DSM 2079 / JCM 5827 / CCUG 10774 / NCTC 10582 / VPI-5482 / E50).